A 90-amino-acid chain; its full sequence is MTRTVKCRKYNEELPGLDRPPYPGAKGQDIFEHISQKAWKEWQDHQTMLINEKRLNMMNAEDRKFIQAEMDKFFAGEDYAQAEGYVPPSN.

Belongs to the Fe(2+)-trafficking protein family.

In terms of biological role, could be a mediator in iron transactions between iron acquisition and iron-requiring processes, such as synthesis and/or repair of Fe-S clusters in biosynthetic enzymes. In Pseudomonas entomophila (strain L48), this protein is Probable Fe(2+)-trafficking protein.